The sequence spans 240 residues: Uridylate kinase (240 aa).

13–16 (KFSG) contributes to the ATP binding site. Glycine 55 serves as a coordination point for UMP. Residues glycine 56 and arginine 60 each coordinate ATP. UMP-binding positions include aspartate 76 and 137-144 (TGNPFFTT). Residues threonine 164, tyrosine 170, and aspartate 173 each coordinate ATP.

This sequence belongs to the UMP kinase family. In terms of assembly, homohexamer.

It localises to the cytoplasm. It carries out the reaction UMP + ATP = UDP + ADP. Its pathway is pyrimidine metabolism; CTP biosynthesis via de novo pathway; UDP from UMP (UMPK route): step 1/1. Inhibited by UTP. Its function is as follows. Catalyzes the reversible phosphorylation of UMP to UDP. The chain is Uridylate kinase from Helicobacter acinonychis (strain Sheeba).